The chain runs to 100 residues: Urease subunit gamma (100 aa).

Belongs to the urease gamma subunit family. As to quaternary structure, heterotrimer of UreA (gamma), UreB (beta) and UreC (alpha) subunits. Three heterotrimers associate to form the active enzyme.

It localises to the cytoplasm. The enzyme catalyses urea + 2 H2O + H(+) = hydrogencarbonate + 2 NH4(+). It participates in nitrogen metabolism; urea degradation; CO(2) and NH(3) from urea (urease route): step 1/1. The polypeptide is Urease subunit gamma (Pseudomonas putida (strain ATCC 700007 / DSM 6899 / JCM 31910 / BCRC 17059 / LMG 24140 / F1)).